The following is a 144-amino-acid chain: Mercuric transport protein MerC (144 aa).

Topologically, residues 1-21 (MSAITRIIDKIGIVGTIVGSF) are cytoplasmic. The chain crosses the membrane as a helical span at residues 22-42 (SCAMCFPAAASLGAAIGLGFL). The Hg(2+) site is built by Cys-23 and Cys-26. Residues 43–46 (SQWE) lie on the Periplasmic side of the membrane. The chain crosses the membrane as a helical span at residues 47-67 (GLFVQWLIPIFASVALLATLA). At 68–78 (GWFSHRQWQRT) the chain is on the cytoplasmic side. A helical transmembrane segment spans residues 79-99 (LLGSIGPVLALVGVFGLTHHF). Over 100–103 (LDKD) the chain is Periplasmic. A helical membrane pass occupies residues 104 to 124 (LARVIFYTGLVVMFLVSIWDM). Residues 125–144 (VNPANRRCATDGCETPAPRS) are Cytoplasmic-facing.

Monomer.

The protein resides in the cell inner membrane. Its activity is regulated as follows. Inhibited by the thiol-modifying reagent N-ethylmaleimide (NEM). Its function is as follows. Involved in mercuric ion uptake. The chain is Mercuric transport protein MerC from Acidithiobacillus ferrooxidans (Thiobacillus ferrooxidans).